A 159-amino-acid polypeptide reads, in one-letter code: MPREKGRKVVASNRKARHDYSILDTYEAGMALTGTEVKSLRAGRASLVDAFAQERNGELYLHGMHIPEYVQGTWTNHEPRRTRKLLLNRIEIDRLIGKTRESGLTIVPLQVYFSDGWAKVEIGVAKGKKSYDKRQDLAKRDAQREIARAAGRRGKGMAD.

Belongs to the SmpB family.

The protein resides in the cytoplasm. Its function is as follows. Required for rescue of stalled ribosomes mediated by trans-translation. Binds to transfer-messenger RNA (tmRNA), required for stable association of tmRNA with ribosomes. tmRNA and SmpB together mimic tRNA shape, replacing the anticodon stem-loop with SmpB. tmRNA is encoded by the ssrA gene; the 2 termini fold to resemble tRNA(Ala) and it encodes a 'tag peptide', a short internal open reading frame. During trans-translation Ala-aminoacylated tmRNA acts like a tRNA, entering the A-site of stalled ribosomes, displacing the stalled mRNA. The ribosome then switches to translate the ORF on the tmRNA; the nascent peptide is terminated with the 'tag peptide' encoded by the tmRNA and targeted for degradation. The ribosome is freed to recommence translation, which seems to be the essential function of trans-translation. In Salinispora tropica (strain ATCC BAA-916 / DSM 44818 / JCM 13857 / NBRC 105044 / CNB-440), this protein is SsrA-binding protein.